The primary structure comprises 410 residues: Aspartic proteinase Asp1 (410 aa).

Residues 1–23 form the signal peptide; that stretch reads MTARLALLASLLLLLQLVPPSSA. The propeptide at 24–46 is removed in mature form; the sequence is VVLELHGNVYPIGHFFVTMNIGD. Residues 38-392 enclose the Peptidase A1 domain; it reads FFVTMNIGDP…DSERSLLGWV (355 aa). Active-site residues include Asp56 and Asp257.

It belongs to the peptidase A1 family. In terms of tissue distribution, expressed in pollen, nucellus, ovary wall, shoot and root meristem, coleoptiles of immature seeds, and somatic embryos.

Functionally, possesses protease activity in vitro. This chain is Aspartic proteinase Asp1 (ASP1), found in Oryza sativa subsp. indica (Rice).